A 124-amino-acid polypeptide reads, in one-letter code: Small ribosomal subunit protein uS12 (124 aa).

Residue D89 is modified to 3-methylthioaspartic acid.

Belongs to the universal ribosomal protein uS12 family. Part of the 30S ribosomal subunit. Contacts proteins S8 and S17. May interact with IF1 in the 30S initiation complex.

Its function is as follows. With S4 and S5 plays an important role in translational accuracy. Interacts with and stabilizes bases of the 16S rRNA that are involved in tRNA selection in the A site and with the mRNA backbone. Located at the interface of the 30S and 50S subunits, it traverses the body of the 30S subunit contacting proteins on the other side and probably holding the rRNA structure together. The combined cluster of proteins S8, S12 and S17 appears to hold together the shoulder and platform of the 30S subunit. This Proteus mirabilis (strain HI4320) protein is Small ribosomal subunit protein uS12.